The chain runs to 355 residues: Holliday junction branch migration complex subunit RuvB (355 aa).

The tract at residues 1–26 is disordered; the sequence is MSIQTDDFASSSPAARRVVSTAPASP. Residues 5–196 form a large ATPase domain (RuvB-L) region; that stretch reads TDDFASSSPA…FGIVARLEFY (192 aa). Over residues 9–22 the composition is skewed to low complexity; sequence ASSSPAARRVVSTA. Residues leucine 35, arginine 36, glycine 77, lysine 80, threonine 81, threonine 82, 143–145, arginine 186, tyrosine 196, and arginine 233 each bind ATP; that span reads EDY. Threonine 81 is a binding site for Mg(2+). Residues 197–267 are small ATPAse domain (RuvB-S); it reads SVEELARIVT…IADKALAMLD (71 aa). The tract at residues 270–355 is head domain (RuvB-H); it reads PQGFDVMDRK…TTSGSELFDA (86 aa). Residues arginine 325 and arginine 330 each contribute to the DNA site.

This sequence belongs to the RuvB family. As to quaternary structure, homohexamer. Forms an RuvA(8)-RuvB(12)-Holliday junction (HJ) complex. HJ DNA is sandwiched between 2 RuvA tetramers; dsDNA enters through RuvA and exits via RuvB. An RuvB hexamer assembles on each DNA strand where it exits the tetramer. Each RuvB hexamer is contacted by two RuvA subunits (via domain III) on 2 adjacent RuvB subunits; this complex drives branch migration. In the full resolvosome a probable DNA-RuvA(4)-RuvB(12)-RuvC(2) complex forms which resolves the HJ.

Its subcellular location is the cytoplasm. It carries out the reaction ATP + H2O = ADP + phosphate + H(+). In terms of biological role, the RuvA-RuvB-RuvC complex processes Holliday junction (HJ) DNA during genetic recombination and DNA repair, while the RuvA-RuvB complex plays an important role in the rescue of blocked DNA replication forks via replication fork reversal (RFR). RuvA specifically binds to HJ cruciform DNA, conferring on it an open structure. The RuvB hexamer acts as an ATP-dependent pump, pulling dsDNA into and through the RuvAB complex. RuvB forms 2 homohexamers on either side of HJ DNA bound by 1 or 2 RuvA tetramers; 4 subunits per hexamer contact DNA at a time. Coordinated motions by a converter formed by DNA-disengaged RuvB subunits stimulates ATP hydrolysis and nucleotide exchange. Immobilization of the converter enables RuvB to convert the ATP-contained energy into a lever motion, pulling 2 nucleotides of DNA out of the RuvA tetramer per ATP hydrolyzed, thus driving DNA branch migration. The RuvB motors rotate together with the DNA substrate, which together with the progressing nucleotide cycle form the mechanistic basis for DNA recombination by continuous HJ branch migration. Branch migration allows RuvC to scan DNA until it finds its consensus sequence, where it cleaves and resolves cruciform DNA. This is Holliday junction branch migration complex subunit RuvB from Methylibium petroleiphilum (strain ATCC BAA-1232 / LMG 22953 / PM1).